A 195-amino-acid chain; its full sequence is Imidazoleglycerol-phosphate dehydratase (195 aa).

This sequence belongs to the imidazoleglycerol-phosphate dehydratase family.

It localises to the cytoplasm. The catalysed reaction is D-erythro-1-(imidazol-4-yl)glycerol 3-phosphate = 3-(imidazol-4-yl)-2-oxopropyl phosphate + H2O. The protein operates within amino-acid biosynthesis; L-histidine biosynthesis; L-histidine from 5-phospho-alpha-D-ribose 1-diphosphate: step 6/9. This chain is Imidazoleglycerol-phosphate dehydratase, found in Aromatoleum aromaticum (strain DSM 19018 / LMG 30748 / EbN1) (Azoarcus sp. (strain EbN1)).